The primary structure comprises 183 residues: Large ribosomal subunit protein bL25 (183 aa).

Belongs to the bacterial ribosomal protein bL25 family. CTC subfamily. In terms of assembly, part of the 50S ribosomal subunit; part of the 5S rRNA/L5/L18/L25 subcomplex. Contacts the 5S rRNA. Binds to the 5S rRNA independently of L5 and L18.

Functionally, this is one of the proteins that binds to the 5S RNA in the ribosome where it forms part of the central protuberance. This chain is Large ribosomal subunit protein bL25, found in Desulfotalea psychrophila (strain LSv54 / DSM 12343).